Reading from the N-terminus, the 940-residue chain is MSDYKFTLNLPETEFPMRGNLANREPEMLERWTKDGLYQQIRDSRIGRTPFILHDGPPYANGSIHIGHSVNKILKDIIIKSKTMSGFDAPYVPGWDCHGLPIELKVEQKVGKPGQKISAAEFREECRKYAAEQVNGQREDFIRLGVLGDWQNPYLTMDFSTEANIVRSLSKVIESGHLHKGVKPVHWCTDCGSALAEAEVEYEDKTSPAIDVAFVAADSKAVAAKFGVSDYSHPVSMVIWTTTPWTLPANRALSLSPELDYSLVEFEKDGVTQALILAEVLVESCLTRYNVESHTVLGSAKGAAFELVRFNHPFLDFDVPAILGDHVTTDAGTGIVHTAPGHGQDDFVVGQKYGLEVANPVGDNGVYKPDTEYFAGQHVFKANDNVVALLREKSALLNHVAYRHSYPHCWRHKTPIIFRATPQWFISMDNHGLRTQALKEIEQTQWIPDWGQSRIEKMVENRPDWCISRQRTWGVPITLFVNRETEELHPDSVSLMERVASRIEQQGIQAWWDLDAAELLGDEAEQYRKVTDTLDVWFDSGSTFSSVVAARPEFHGHGVDLYLEGSDQHRGWFMSSLMISTAMNGKAPYKQVLTHGFTVDGKGRKMSKSIGNVIAPQTVTNKLGADILRLWVAATDYSGEMTVSDEILNRSADAYRRIRNTARFLLANLNGFEPAKDLVAVEDMVALDRWVVRRAAALQQEIIEAYEQYNFHIVTQKLMQFCSVELGSFYLDIIKDRQYTAKQEGHARRSCQSALYLISEAMVRWIAPILSFTADEVWQLLPGERDAYVFTQEWYQGLKSVTLATDLSDDYWQQLLTVRNEVNKVIEQARRDKRIGGSLEAEVTLFADAALTEQLTHIGDELRFVLLTSEAKVLPLADATSEAVETELASLKLLVASSTAEKCERCWHHREEVGTIEAHPTLCTRCVTNIEGDGEVRLFA.

Residues 58-68 (PYANGSIHIGH) carry the 'HIGH' region motif. E564 contacts L-isoleucyl-5'-AMP. Residues 605-609 (KMSKS) carry the 'KMSKS' region motif. K608 lines the ATP pocket. Zn(2+) contacts are provided by C903, C906, C923, and C926.

It belongs to the class-I aminoacyl-tRNA synthetase family. IleS type 1 subfamily. In terms of assembly, monomer. Zn(2+) serves as cofactor.

It is found in the cytoplasm. It catalyses the reaction tRNA(Ile) + L-isoleucine + ATP = L-isoleucyl-tRNA(Ile) + AMP + diphosphate. Catalyzes the attachment of isoleucine to tRNA(Ile). As IleRS can inadvertently accommodate and process structurally similar amino acids such as valine, to avoid such errors it has two additional distinct tRNA(Ile)-dependent editing activities. One activity is designated as 'pretransfer' editing and involves the hydrolysis of activated Val-AMP. The other activity is designated 'posttransfer' editing and involves deacylation of mischarged Val-tRNA(Ile). The sequence is that of Isoleucine--tRNA ligase from Shewanella baltica (strain OS223).